A 54-amino-acid chain; its full sequence is Large ribosomal subunit protein bL33 (54 aa).

The protein belongs to the bacterial ribosomal protein bL33 family.

The chain is Large ribosomal subunit protein bL33 from Xylella fastidiosa (strain M23).